We begin with the raw amino-acid sequence, 707 residues long: Choline transporter-like protein 4 (707 aa).

Over 1-33 the chain is Cytoplasmic; the sequence is MGGKQDQDKEAYGKPAKYDPSFRGPIRNRSCTD. The chain crosses the membrane as a helical span at residues 34-54; the sequence is IICCVLFFLFILGYIAVGILA. The Extracellular portion of the chain corresponds to 55–227; the sequence is WVYGDPKQVL…KIFEDFAQSW (173 aa). 3 N-linked (GlcNAc...) asparagine glycosylation sites follow: asparagine 68, asparagine 185, and asparagine 196. Residues 228–248 form a helical membrane-spanning segment; it reads YWILIALGLALVLSLLFILLL. The Cytoplasmic portion of the chain corresponds to 249 to 250; the sequence is RL. The chain crosses the membrane as a helical span at residues 251–271; that stretch reads VAGPLVFVLIIGVLGVLAYGI. The Extracellular portion of the chain corresponds to 272–307; the sequence is YHCWEEYRVLRDKGASISQLGFTTNLSAYRNVQETW. Asparagine 296 is a glycosylation site (N-linked (GlcNAc...) asparagine). Residues 308–328 traverse the membrane as a helical segment; sequence LAALIILAVLEGVLLLMLIFL. At 329 to 356 the chain is on the cytoplasmic side; it reads RQRICIAIALLKEASRAVGYIMSTMFYP. A helical transmembrane segment spans residues 357 to 377; it reads LVTFALLLVCIAYWAIIALFL. Topologically, residues 378–452 are extracellular; sequence ATSGQPQYVF…AVLGLFWTIN (75 aa). N-linked (GlcNAc...) asparagine glycans are attached at residues asparagine 391, asparagine 403, and asparagine 413. A helical transmembrane segment spans residues 453–473; sequence WVLALGQCVLAGAFASFYWAF. Residues 474–498 lie on the Cytoplasmic side of the membrane; sequence HKPRDIPTFPLGSAFLRTLRYHTGS. The helical transmembrane segment at 499 to 519 threads the bilayer; that stretch reads LAFGALILTLVQIARVILEYI. Residues 520–557 are Extracellular-facing; sequence DHKLRGAQNPLTRCILCCFKCCLWCLEKFIKFLNRNAY. A helical membrane pass occupies residues 558–578; the sequence is IMIAIYGKNFCVSAKNAFMLL. The Cytoplasmic segment spans residues 579 to 594; sequence MRNIVRVVVLDKVTDL. A helical transmembrane segment spans residues 595–615; it reads LLFFGKLLVVGGVGVLSFFFF. Residues 616–635 lie on the Extracellular side of the membrane; the sequence is TGRIPSLGKTFENPQLNYYW. A helical membrane pass occupies residues 636–656; it reads LPIMVSILGAYLIASGFFSVF. The Cytoplasmic segment spans residues 657–707; it reads GMCVDTLFLCFLEDLERNDGSADRPYYMSKSLLKILGKKNKGTPGDKKRKK.

This sequence belongs to the CTL (choline transporter-like) family. N-glycosylated; N-glycosylation of Asn-68 and Asn-391 is required for a proper thiamine pyrophosphate uptake.

It localises to the membrane. The protein localises to the apical cell membrane. The enzyme catalyses choline(out) + n H(+)(in) = choline(in) + n H(+)(out). It carries out the reaction thiamine diphosphate(out) = thiamine diphosphate(in). Its function is as follows. Choline transporter that plays a role in the choline-acetylcholine system and is required to the efferent innervation of hair cells in the olivocochlear bundle for the maintenance of physiological function of outer hair cells and the protection of hair cells from acoustic injury. Also described as a thiamine pyrophosphate transporter in colon, may mediate the absorption of microbiota-generated thiamine pyrophosphate and contribute to host thiamine (vitamin B1) homeostasis. This is Choline transporter-like protein 4 from Bos taurus (Bovine).